The sequence spans 480 residues: UDP-N-acetylmuramate--L-alanine ligase (480 aa).

115 to 121 is an ATP binding site; sequence GTHGKTT.

This sequence belongs to the MurCDEF family.

Its subcellular location is the cytoplasm. The enzyme catalyses UDP-N-acetyl-alpha-D-muramate + L-alanine + ATP = UDP-N-acetyl-alpha-D-muramoyl-L-alanine + ADP + phosphate + H(+). It functions in the pathway cell wall biogenesis; peptidoglycan biosynthesis. In terms of biological role, cell wall formation. This chain is UDP-N-acetylmuramate--L-alanine ligase, found in Gluconacetobacter diazotrophicus (strain ATCC 49037 / DSM 5601 / CCUG 37298 / CIP 103539 / LMG 7603 / PAl5).